The primary structure comprises 316 residues: MSPSMPVATTVAADPIAVGAVAVKRPALVIGSLSTAEDGTYQALISDLQSSRQVDRQLLDRLVDNATTLEPSSYDSVHITLAPSDYQGLTQKLPQLLSQLLTGLTPLGTLHLINLTSAVRTLPSELTLAGFNVLSALPDEGTIIAQKPQHVASTSVPLKSRQPGALLNRKKTDPAKKQALWALSSPSTPKIDPEALLTAEDKTRLTPACEPVRSSAPRRKKACKSCSCGLAELEEEERKLGKVVLLDGSQDGTAKEVSQDEKERLIIAAKAAPKATSSCGSCFLGDAFRCAGCPYLGLPAFKPGEKVEIDFGMDDF.

Positions 4–156 (SMPVATTVAA…KPQHVASTSV (153 aa)) are N-terminal SAM-like domain. The segment at 157 to 202 (PLKSRQPGALLNRKKTDPAKKQALWALSSPSTPKIDPEALLTAEDK) is linker. Residues cysteine 209, cysteine 223, cysteine 226, and cysteine 228 each coordinate [2Fe-2S] cluster. Residues 209-228 (CEPVRSSAPRRKKACKSCSC) are fe-S binding site A. [4Fe-4S] cluster-binding residues include cysteine 279, cysteine 282, cysteine 290, and cysteine 293. Short sequence motifs (cx2C motif) lie at residues 279–282 (CGSC) and 290–293 (CAGC). Positions 279–293 (CGSCFLGDAFRCAGC) are fe-S binding site B.

The protein belongs to the anamorsin family. Monomer. Interacts with TAH18. Interacts with MIA40. It depends on [2Fe-2S] cluster as a cofactor. Requires [4Fe-4S] cluster as cofactor.

It localises to the cytoplasm. Its subcellular location is the mitochondrion intermembrane space. Functionally, component of the cytosolic iron-sulfur (Fe-S) protein assembly (CIA) machinery required for the maturation of extramitochondrial Fe-S proteins. Part of an electron transfer chain functioning in an early step of cytosolic Fe-S biogenesis, facilitating the de novo assembly of a [4Fe-4S] cluster on the scaffold complex CFD1-NBP35. Electrons are transferred to DRE2 from NADPH via the FAD- and FMN-containing protein TAH18. TAH18-DRE2 are also required for the assembly of the diferric tyrosyl radical cofactor of ribonucleotide reductase (RNR), probably by providing electrons for reduction during radical cofactor maturation in the catalytic small subunit RNR2. This chain is Fe-S cluster assembly protein DRE2, found in Laccaria bicolor (strain S238N-H82 / ATCC MYA-4686) (Bicoloured deceiver).